The primary structure comprises 158 residues: Na(+)/H(+) antiporter subunit E (158 aa).

2 consecutive transmembrane segments (helical) span residues 21–41 (SPSA…LFFF) and 51–71 (LWKL…LYLA).

The protein belongs to the CPA3 antiporters (TC 2.A.63) subunit E family. Forms a heterooligomeric complex that consists of seven subunits: MrpA, MrpB, MrpC, MrpD, MrpE, MrpF and MrpG.

It localises to the cell membrane. Functionally, mrp complex is a Na(+)/H(+) antiporter that is considered to be the major Na(+) excretion system in B.subtilis. Has a major role in Na(+) resistance and a minor role in Na(+)- and K(+)-dependent pH homeostasis as compared to TetB. MrpA may be the actual Na(+)/H(+) antiporter, although the six other Mrp proteins are all required for Na(+)/H(+) antiport activity and Na(+) resistance. MrpA is required for initiation of sporulation when external Na(+) concentration increases. Also transports Li(+) but not K(+), Ca(2+) or Mg(2+). This chain is Na(+)/H(+) antiporter subunit E (mrpE), found in Bacillus subtilis (strain 168).